Reading from the N-terminus, the 228-residue chain is PKHD-type hydroxylase RPE_4577 (228 aa).

One can recognise a Fe2OG dioxygenase domain in the interval 78-180 (TIFPPLFNRY…RIASFFWTQS (103 aa)). H98, D100, and H161 together coordinate Fe cation. Residue R171 participates in 2-oxoglutarate binding.

Fe(2+) serves as cofactor. The cofactor is L-ascorbate.

The chain is PKHD-type hydroxylase RPE_4577 from Rhodopseudomonas palustris (strain BisA53).